The primary structure comprises 876 residues: Alanine--tRNA ligase (876 aa).

Residues histidine 564, histidine 568, cysteine 666, and histidine 670 each coordinate Zn(2+).

This sequence belongs to the class-II aminoacyl-tRNA synthetase family. In terms of assembly, homotetramer. It depends on Zn(2+) as a cofactor.

The protein resides in the cytoplasm. The enzyme catalyses tRNA(Ala) + L-alanine + ATP = L-alanyl-tRNA(Ala) + AMP + diphosphate. Its function is as follows. Catalyzes the attachment of alanine to tRNA(Ala) in a two-step reaction: alanine is first activated by ATP to form Ala-AMP and then transferred to the acceptor end of tRNA(Ala). Also edits incorrectly charged Ser-tRNA(Ala) and Gly-tRNA(Ala) via its editing domain. The polypeptide is Alanine--tRNA ligase (Salmonella choleraesuis (strain SC-B67)).